Consider the following 194-residue polypeptide: Ribosome maturation factor RimM (194 aa).

The 99-residue stretch at 92-190 (DDGYYDHELI…ALVVTPPEGL (99 aa)) folds into the PRC barrel domain.

The protein belongs to the RimM family. In terms of assembly, binds ribosomal protein uS19.

It localises to the cytoplasm. An accessory protein needed during the final step in the assembly of 30S ribosomal subunit, possibly for assembly of the head region. Essential for efficient processing of 16S rRNA. May be needed both before and after RbfA during the maturation of 16S rRNA. It has affinity for free ribosomal 30S subunits but not for 70S ribosomes. The polypeptide is Ribosome maturation factor RimM (Corynebacterium urealyticum (strain ATCC 43042 / DSM 7109)).